We begin with the raw amino-acid sequence, 157 residues long: Probable succinate transporter subunit YjjB (157 aa).

4 consecutive transmembrane segments (helical) span residues 8–28 (LALAQDMILAAIPAVGFAMVF), 50–70 (MILMTSGLNIEWSTFMASMLV), 87–107 (VFTVAAVIPMFPGISAYTAMI), and 129–149 (FLTASSIVGALSIGLSIPGLW).

The protein belongs to the ThrE exporter (TC 2.A.79) family. The transporter is composed of YjjB and YjjP.

Its subcellular location is the cell inner membrane. Functionally, involved in succinate export with YjjP. Both proteins are required for export. This is Probable succinate transporter subunit YjjB from Escherichia coli O127:H6 (strain E2348/69 / EPEC).